A 380-amino-acid polypeptide reads, in one-letter code: Tetraacyldisaccharide 4'-kinase (380 aa).

Ser-51–Thr-58 contributes to the ATP binding site.

The protein belongs to the LpxK family.

It carries out the reaction a lipid A disaccharide + ATP = a lipid IVA + ADP + H(+). Its pathway is glycolipid biosynthesis; lipid IV(A) biosynthesis; lipid IV(A) from (3R)-3-hydroxytetradecanoyl-[acyl-carrier-protein] and UDP-N-acetyl-alpha-D-glucosamine: step 6/6. Functionally, transfers the gamma-phosphate of ATP to the 4'-position of a tetraacyldisaccharide 1-phosphate intermediate (termed DS-1-P) to form tetraacyldisaccharide 1,4'-bis-phosphate (lipid IVA). This Bacteroides thetaiotaomicron (strain ATCC 29148 / DSM 2079 / JCM 5827 / CCUG 10774 / NCTC 10582 / VPI-5482 / E50) protein is Tetraacyldisaccharide 4'-kinase.